The chain runs to 141 residues: Small ribosomal subunit protein uS12 (141 aa).

A 3-methylthioaspartic acid modification is found at aspartate 89. Residues 104 to 141 (ASGAVGPSNTNKLNRNVSRSKYGVKRPKAGAKPASKAK) form a disordered region. The segment covering 110–122 (PSNTNKLNRNVSR) has biased composition (polar residues). Residues 125–141 (YGVKRPKAGAKPASKAK) show a composition bias toward basic residues.

Belongs to the universal ribosomal protein uS12 family. As to quaternary structure, part of the 30S ribosomal subunit. Contacts proteins S8 and S17. May interact with IF1 in the 30S initiation complex.

In terms of biological role, with S4 and S5 plays an important role in translational accuracy. Functionally, interacts with and stabilizes bases of the 16S rRNA that are involved in tRNA selection in the A site and with the mRNA backbone. Located at the interface of the 30S and 50S subunits, it traverses the body of the 30S subunit contacting proteins on the other side and probably holding the rRNA structure together. The combined cluster of proteins S8, S12 and S17 appears to hold together the shoulder and platform of the 30S subunit. The chain is Small ribosomal subunit protein uS12 from Methylacidiphilum infernorum (isolate V4) (Methylokorus infernorum (strain V4)).